We begin with the raw amino-acid sequence, 118 residues long: V-type proton ATPase subunit G 1 (118 aa).

An N-acetylalanine modification is found at Ala2. Residues 55 to 90 (FQSKQQAAMGSQGNLSAEVEQATRRQVQGMQSSQQR) are disordered. Composition is skewed to polar residues over residues 56 to 69 (QSKQQAAMGSQGNL) and 78 to 89 (RRQVQGMQSSQQ).

Belongs to the V-ATPase G subunit family. V-ATPase is a heteromultimeric enzyme made up of two complexes: the ATP-hydrolytic V1 complex and the proton translocation V0 complex. The V1 complex consists of three catalytic AB heterodimers that form a heterohexamer, three peripheral stalks each consisting of EG heterodimers, one central rotor including subunits D and F, and the regulatory subunits C and H. The proton translocation complex V0 consists of the proton transport subunit a, a ring of proteolipid subunits c9c'', rotary subunit d, subunits e and f, and the accessory subunits ATP6AP1/Ac45 and ATP6AP2/PRR.

It is found in the apical cell membrane. Subunit of the V1 complex of vacuolar(H+)-ATPase (V-ATPase), a multisubunit enzyme composed of a peripheral complex (V1) that hydrolyzes ATP and a membrane integral complex (V0) that translocates protons. V-ATPase is responsible for acidifying and maintaining the pH of intracellular compartments and in some cell types, is targeted to the plasma membrane, where it is responsible for acidifying the extracellular environment. In aerobic conditions, involved in intracellular iron homeostasis, thus triggering the activity of Fe(2+) prolyl hydroxylase (PHD) enzymes, and leading to HIF1A hydroxylation and subsequent proteasomal degradation. The protein is V-type proton ATPase subunit G 1 (ATP6V1G1) of Canis lupus familiaris (Dog).